Here is a 78-residue protein sequence, read N- to C-terminus: ATP synthase subunit c (78 aa).

2 helical membrane-spanning segments follow: residues 11–31 (FIGA…VGHV) and 53–73 (LFIG…VALL).

It belongs to the ATPase C chain family. F-type ATPases have 2 components, F(1) - the catalytic core - and F(0) - the membrane proton channel. F(1) has five subunits: alpha(3), beta(3), gamma(1), delta(1), epsilon(1). F(0) has four main subunits: a(1), b(1), b'(1) and c(10-14). The alpha and beta chains form an alternating ring which encloses part of the gamma chain. F(1) is attached to F(0) by a central stalk formed by the gamma and epsilon chains, while a peripheral stalk is formed by the delta, b and b' chains.

The protein resides in the cell inner membrane. F(1)F(0) ATP synthase produces ATP from ADP in the presence of a proton or sodium gradient. F-type ATPases consist of two structural domains, F(1) containing the extramembraneous catalytic core and F(0) containing the membrane proton channel, linked together by a central stalk and a peripheral stalk. During catalysis, ATP synthesis in the catalytic domain of F(1) is coupled via a rotary mechanism of the central stalk subunits to proton translocation. Its function is as follows. Key component of the F(0) channel; it plays a direct role in translocation across the membrane. A homomeric c-ring of between 10-14 subunits forms the central stalk rotor element with the F(1) delta and epsilon subunits. The polypeptide is ATP synthase subunit c (Jannaschia sp. (strain CCS1)).